The sequence spans 349 residues: NADH-quinone oxidoreductase subunit H (349 aa).

Transmembrane regions (helical) follow at residues 19-39, 88-108, 123-143, 161-181, 202-222, 249-269, 284-304, and 325-345; these read VWTL…VAYL, GLFI…WAVV, LLFL…AGWA, VSYE…SASL, FLSW…ISGI, GMAF…VSIL, FLPD…FVFL, and VFIP…MSPL.

Belongs to the complex I subunit 1 family. In terms of assembly, NDH-1 is composed of 14 different subunits. Subunits NuoA, H, J, K, L, M, N constitute the membrane sector of the complex.

Its subcellular location is the cell inner membrane. The catalysed reaction is a quinone + NADH + 5 H(+)(in) = a quinol + NAD(+) + 4 H(+)(out). Functionally, NDH-1 shuttles electrons from NADH, via FMN and iron-sulfur (Fe-S) centers, to quinones in the respiratory chain. The immediate electron acceptor for the enzyme in this species is believed to be ubiquinone. Couples the redox reaction to proton translocation (for every two electrons transferred, four hydrogen ions are translocated across the cytoplasmic membrane), and thus conserves the redox energy in a proton gradient. This subunit may bind ubiquinone. The sequence is that of NADH-quinone oxidoreductase subunit H from Aromatoleum aromaticum (strain DSM 19018 / LMG 30748 / EbN1) (Azoarcus sp. (strain EbN1)).